Reading from the N-terminus, the 901-residue chain is MutS protein homolog 5 (901 aa).

An ATP-binding site is contributed by 643–650 (GANASGKS).

The protein belongs to the DNA mismatch repair MutS family. In terms of assembly, heterooligomer of MSH4 and MSH5.

Involved in meiotic recombination. Facilitate crossovers between homologs during meiosis. This is MutS protein homolog 5 (MSH5) from Saccharomyces cerevisiae (strain ATCC 204508 / S288c) (Baker's yeast).